The chain runs to 412 residues: Multifunctional CCA protein (412 aa).

G8 and R11 together coordinate ATP. Residues G8 and R11 each contribute to the CTP site. 2 residues coordinate Mg(2+): D21 and D23. Positions 91, 137, and 140 each coordinate ATP. CTP-binding residues include R91, R137, and R140. An HD domain is found at 228–329 (TGIHTLMTLS…VKLFDSIDAW (102 aa)).

This sequence belongs to the tRNA nucleotidyltransferase/poly(A) polymerase family. Bacterial CCA-adding enzyme type 1 subfamily. In terms of assembly, monomer. Can also form homodimers and oligomers. Mg(2+) is required as a cofactor. Requires Ni(2+) as cofactor.

It catalyses the reaction a tRNA precursor + 2 CTP + ATP = a tRNA with a 3' CCA end + 3 diphosphate. The catalysed reaction is a tRNA with a 3' CCA end + 2 CTP + ATP = a tRNA with a 3' CCACCA end + 3 diphosphate. Its function is as follows. Catalyzes the addition and repair of the essential 3'-terminal CCA sequence in tRNAs without using a nucleic acid template. Adds these three nucleotides in the order of C, C, and A to the tRNA nucleotide-73, using CTP and ATP as substrates and producing inorganic pyrophosphate. tRNA 3'-terminal CCA addition is required both for tRNA processing and repair. Also involved in tRNA surveillance by mediating tandem CCA addition to generate a CCACCA at the 3' terminus of unstable tRNAs. While stable tRNAs receive only 3'-terminal CCA, unstable tRNAs are marked with CCACCA and rapidly degraded. This chain is Multifunctional CCA protein, found in Shigella dysenteriae serotype 1 (strain Sd197).